A 512-amino-acid polypeptide reads, in one-letter code: Gasdermin-E (512 aa).

The tract at residues 1–56 (MFAKATRNFLKEVDAGGDLISVSHLNDSDKLQLLSLVTKKKRYWCWQRPKYQILSA) is membrane targeting domain. Cys45 is modified (S-(2-succinyl)cysteine). Residue Lys120 forms a Glycyl lysine isopeptide (Lys-Gly) (interchain with G-Cter in ubiquitin) linkage. Residues Cys156, Cys168, and Cys180 each carry the S-(2-succinyl)cysteine modification. Lys189 is covalently cross-linked (Glycyl lysine isopeptide (Lys-Gly) (interchain with G-Cter in ubiquitin)). Cys235, Cys411, and Cys420 each carry S-(2-succinyl)cysteine.

It belongs to the gasdermin family. Homooligomer; homooligomeric ring-shaped pore complex containing 27-28 subunits when inserted in the membrane. Cleavage at Asp-270 by CASP3 (mature and uncleaved precursor forms) or granzyme B (GZMB) relieves autoinhibition and is sufficient to initiate pyroptosis. Post-translationally, succination by the Krebs cycle intermediate fumarate, which leads to S-(2-succinyl)cysteine residues, inhibits processing by caspases, and ability to initiate pyroptosis. Succination modification is catalyzed by a non-enzymatic reaction caused by an accumulation of fumarate. In terms of processing, ubiquitinated on Lys-120 and Lys-189 via 'Lys-48'-linked polyubiquitin chains, leading to proteasomal degradation. Deubiquitinated by USP48, leading to increased stability. Palmitoylated. Expressed in spleen, kidney, large and small intestine, testicle, stomach and by CD4(+)CD(8+) T cells in thymus. Expressed by macrophages.

The protein resides in the cell membrane. It is found in the cytoplasm. Its subcellular location is the cytosol. With respect to regulation, the full-length protein before cleavage is inactive: intramolecular interactions between N- and C-terminal domains mediate autoinhibition in the absence of activation signal. The intrinsic pyroptosis-inducing activity is carried by the released N-terminal moiety (Gasdermin-E, N-terminal) following cleavage by CASP3 or granzyme B (GZMB). Activated by NLRP1 in the absence of GSDMD expression: NLRP1 cleaves and activates CASP8, promoting downstream activation of CASP3 and subsequent activation of GSDME. In terms of biological role, precursor of a pore-forming protein that converts non-inflammatory apoptosis to pyroptosis. This form constitutes the precursor of the pore-forming protein: upon cleavage, the released N-terminal moiety (Gasdermin-E, N-terminal) binds to membranes and forms pores, triggering pyroptosis. Functionally, pore-forming protein produced by cleavage by CASP3 or granzyme B (GZMB), which converts non-inflammatory apoptosis to pyroptosis or promotes granzyme-mediated pyroptosis, respectively. After cleavage, moves to the plasma membrane, homooligomerizes within the membrane and forms pores of 10-15 nanometers (nm) of inner diameter, allowing the release of mature interleukins (IL1B and IL16) and triggering pyroptosis. Binds to inner leaflet lipids, bisphosphorylated phosphatidylinositols, such as phosphatidylinositol (4,5)-bisphosphate. Cleavage by CASP3 switches CASP3-mediated apoptosis induced by TNF or danger signals, such as chemotherapy drugs, to pyroptosis. Mediates secondary necrosis downstream of the mitochondrial apoptotic pathway and CASP3 activation as well as in response to viral agents. Exhibits bactericidal activity. Cleavage by GZMB promotes tumor suppressor activity by triggering robust anti-tumor immunity. Suppresses tumors by mediating granzyme-mediated pyroptosis in target cells of natural killer (NK) cells: cleavage by granzyme B (GZMB), delivered to target cells from NK-cells, triggers pyroptosis of tumor cells and tumor suppression. May play a role in the p53/TP53-regulated cellular response to DNA damage. This is Gasdermin-E from Mus musculus (Mouse).